The primary structure comprises 549 residues: Hydroxylamine reductase (549 aa).

The [2Fe-2S] cluster site is built by Cys-3, Cys-6, Cys-18, and Cys-25. Positions 248, 272, 316, 404, 432, 457, 491, and 493 each coordinate hybrid [4Fe-2O-2S] cluster. Cys-404 carries the cysteine persulfide modification.

Belongs to the HCP family. Requires [2Fe-2S] cluster as cofactor. The cofactor is hybrid [4Fe-2O-2S] cluster.

The protein localises to the cytoplasm. It catalyses the reaction A + NH4(+) + H2O = hydroxylamine + AH2 + H(+). Catalyzes the reduction of hydroxylamine to form NH(3) and H(2)O. This Aeromonas hydrophila subsp. hydrophila (strain ATCC 7966 / DSM 30187 / BCRC 13018 / CCUG 14551 / JCM 1027 / KCTC 2358 / NCIMB 9240 / NCTC 8049) protein is Hydroxylamine reductase.